The chain runs to 92 residues: Em-like protein GEA6 (92 aa).

2 stretches are compositionally biased toward basic and acidic residues: residues 1-18 (MASQ…KKGE) and 37-51 (AEGR…KEQL). The interval 1-92 (MASQQEKKQL…IDESKFRTKT (92 aa)) is disordered.

Belongs to the small hydrophilic plant seed protein family. Present only in nearly dry and dry seeds.

Its function is as follows. It is thought to provide protection for the cytoplasm during the desiccation stage of embryo development. The polypeptide is Em-like protein GEA6 (EM6) (Arabidopsis thaliana (Mouse-ear cress)).